A 493-amino-acid polypeptide reads, in one-letter code: Transcript termination protein A18 (493 aa).

A Helicase ATP-binding domain is found at 100–256 (MIESKRPLYI…NSIINIAKLS (157 aa)). 113–120 (LACGFGKT) is a binding site for ATP. The short motif at 206-209 (DESH) is the DESH box element.

It belongs to the helicase family. Poxviruses subfamily. In terms of assembly, interacts with G2. Might be part of a transcription complex composed at least of G2, A18, and H5.

It localises to the virion. DNA helicase which seems to act as a postreplicative transcription termination factor. Involved in ATP-dependent release of nascent RNA. Forms a stable complex with single-stranded DNA, and to a lesser extent RNA. The sequence is that of Transcript termination protein A18 from Rabbitpox virus (strain Utrecht) (RPV).